We begin with the raw amino-acid sequence, 152 residues long: 3-dehydroquinate dehydratase (152 aa).

Catalysis depends on Tyr-26, which acts as the Proton acceptor. Residues Asn-78, His-84, and Asp-91 each contribute to the substrate site. The active-site Proton donor is the His-104. Residues 105–106 (IS) and Arg-115 each bind substrate.

Belongs to the type-II 3-dehydroquinase family. As to quaternary structure, homododecamer.

The catalysed reaction is 3-dehydroquinate = 3-dehydroshikimate + H2O. It functions in the pathway metabolic intermediate biosynthesis; chorismate biosynthesis; chorismate from D-erythrose 4-phosphate and phosphoenolpyruvate: step 3/7. Catalyzes a trans-dehydration via an enolate intermediate. This chain is 3-dehydroquinate dehydratase, found in Buchnera aphidicola subsp. Cinara cedri (strain Cc).